The following is a 553-amino-acid chain: Glutamine--tRNA ligase (553 aa).

Residues 34–44 carry the 'HIGH' region motif; it reads PEPNGYLHIGH. Residues 35 to 37 and 41 to 47 each bind ATP; these read EPN and HIGHAKS. The L-glutamine site is built by Asp67 and Tyr212. Residues Thr231, 261 to 262, and 269 to 271 contribute to the ATP site; these read RL and MSK. The 'KMSKS' region signature appears at 268 to 272; the sequence is IMSKR.

Belongs to the class-I aminoacyl-tRNA synthetase family. As to quaternary structure, monomer.

The protein resides in the cytoplasm. It carries out the reaction tRNA(Gln) + L-glutamine + ATP = L-glutaminyl-tRNA(Gln) + AMP + diphosphate. This Tolumonas auensis (strain DSM 9187 / NBRC 110442 / TA 4) protein is Glutamine--tRNA ligase.